Here is a 157-residue protein sequence, read N- to C-terminus: SsrA-binding protein (157 aa).

The segment at 132 to 157 (EHDKRDTIKEREGKREVERAMKSRHR) is disordered.

It belongs to the SmpB family.

It localises to the cytoplasm. In terms of biological role, required for rescue of stalled ribosomes mediated by trans-translation. Binds to transfer-messenger RNA (tmRNA), required for stable association of tmRNA with ribosomes. tmRNA and SmpB together mimic tRNA shape, replacing the anticodon stem-loop with SmpB. tmRNA is encoded by the ssrA gene; the 2 termini fold to resemble tRNA(Ala) and it encodes a 'tag peptide', a short internal open reading frame. During trans-translation Ala-aminoacylated tmRNA acts like a tRNA, entering the A-site of stalled ribosomes, displacing the stalled mRNA. The ribosome then switches to translate the ORF on the tmRNA; the nascent peptide is terminated with the 'tag peptide' encoded by the tmRNA and targeted for degradation. The ribosome is freed to recommence translation, which seems to be the essential function of trans-translation. The chain is SsrA-binding protein from Paracidovorax citrulli (strain AAC00-1) (Acidovorax citrulli).